The following is a 501-amino-acid chain: Phytoene desaturase (lycopene-forming) (501 aa).

12-45 (IVIGAGFGGLALAIRLQSAGIATTLVEARDKPGG) serves as a coordination point for FAD.

Belongs to the carotenoid/retinoid oxidoreductase family. Requires FAD as cofactor.

The catalysed reaction is 15-cis-phytoene + 4 A = all-trans-lycopene + 4 AH2. It participates in carotenoid biosynthesis; astaxanthin biosynthesis. Functionally, this enzyme converts phytoene into lycopene via the intermediaries of phytofluene, zeta-carotene and neurosporene by the introduction of four double bonds. The sequence is that of Phytoene desaturase (lycopene-forming) (crtI) from Paracoccus sp. (strain N81106 / MBIC 01143) (Agrobacterium aurantiacum).